The following is a 142-amino-acid chain: Large ribosomal subunit protein uL11 (142 aa).

This sequence belongs to the universal ribosomal protein uL11 family. In terms of assembly, part of the ribosomal stalk of the 50S ribosomal subunit. Interacts with L10 and the large rRNA to form the base of the stalk. L10 forms an elongated spine to which L12 dimers bind in a sequential fashion forming a multimeric L10(L12)X complex. Post-translationally, one or more lysine residues are methylated.

Its function is as follows. Forms part of the ribosomal stalk which helps the ribosome interact with GTP-bound translation factors. The sequence is that of Large ribosomal subunit protein uL11 from Methylocella silvestris (strain DSM 15510 / CIP 108128 / LMG 27833 / NCIMB 13906 / BL2).